A 322-amino-acid polypeptide reads, in one-letter code: CRISPR-associated protein Cas1 1 (322 aa).

The Mn(2+) site is built by Glu-149, His-214, and Glu-229.

Belongs to the CRISPR-associated endonuclease Cas1 family. In terms of assembly, homodimer, forms a heterotetramer with a Cas2 homodimer. Mg(2+) is required as a cofactor. It depends on Mn(2+) as a cofactor.

Its function is as follows. CRISPR (clustered regularly interspaced short palindromic repeat), is an adaptive immune system that provides protection against mobile genetic elements (viruses, transposable elements and conjugative plasmids). CRISPR clusters contain spacers, sequences complementary to antecedent mobile elements, and target invading nucleic acids. CRISPR clusters are transcribed and processed into CRISPR RNA (crRNA). Acts as a dsDNA endonuclease. Involved in the integration of spacer DNA into the CRISPR cassette. In Methanobrevibacter ruminantium (strain ATCC 35063 / DSM 1093 / JCM 13430 / OCM 146 / M1) (Methanobacterium ruminantium), this protein is CRISPR-associated protein Cas1 1.